The primary structure comprises 213 residues: ATP-dependent Clp protease proteolytic subunit (213 aa).

Serine 114 functions as the Nucleophile in the catalytic mechanism. The active site involves histidine 139.

It belongs to the peptidase S14 family. In terms of assembly, fourteen ClpP subunits assemble into 2 heptameric rings which stack back to back to give a disk-like structure with a central cavity, resembling the structure of eukaryotic proteasomes.

The protein localises to the cytoplasm. The catalysed reaction is Hydrolysis of proteins to small peptides in the presence of ATP and magnesium. alpha-casein is the usual test substrate. In the absence of ATP, only oligopeptides shorter than five residues are hydrolyzed (such as succinyl-Leu-Tyr-|-NHMec, and Leu-Tyr-Leu-|-Tyr-Trp, in which cleavage of the -Tyr-|-Leu- and -Tyr-|-Trp bonds also occurs).. Cleaves peptides in various proteins in a process that requires ATP hydrolysis. Has a chymotrypsin-like activity. Plays a major role in the degradation of misfolded proteins. This is ATP-dependent Clp protease proteolytic subunit from Ectopseudomonas mendocina (strain ymp) (Pseudomonas mendocina).